A 434-amino-acid chain; its full sequence is D-amino acid dehydrogenase (434 aa).

3-17 (VVILGSGVVGVTSAW) contacts FAD.

This sequence belongs to the DadA oxidoreductase family. FAD is required as a cofactor.

It carries out the reaction a D-alpha-amino acid + A + H2O = a 2-oxocarboxylate + AH2 + NH4(+). The protein operates within amino-acid degradation; D-alanine degradation; NH(3) and pyruvate from D-alanine: step 1/1. Its function is as follows. Oxidative deamination of D-amino acids. The chain is D-amino acid dehydrogenase from Yersinia pseudotuberculosis serotype O:3 (strain YPIII).